Reading from the N-terminus, the 412-residue chain is Carboxypeptidase B1 (412 aa).

The signal sequence occupies residues 1-18; sequence MIPRIVVVLLSVLAVVTA. Positions 19–75 are cleaved as a propeptide — activation peptide; it reads RRSYEGYKVYGIVPESPDEAEILYQIRQSNPDLDFWHLTKQPGDEARVLVAPKDQRS. Residues 118–408 enclose the Peptidase M14 domain; that stretch reads SYLRHNEINE…VGIKAMALKV (291 aa). His175 and Glu178 together coordinate Zn(2+). Position 175-178 (175-178) interacts with a peptide; sequence HARE. Asn205 is a glycosylation site (N-linked (GlcNAc...) asparagine). Residues Arg230 and 246–247 contribute to the a peptide site; that span reads NR. The cysteines at positions 240 and 263 are disulfide-linked. His299 contacts Zn(2+). A peptide is bound by residues 300-301 and Tyr351; that span reads SY. Catalysis depends on Glu374, which acts as the Proton donor/acceptor. N-linked (GlcNAc...) asparagine glycosylation is present at Asn395.

This sequence belongs to the peptidase M14 family. Monomer. Interacts with Dengue virus type 2 (DENV2, MY89-88549 strain) envelope protein E. Interacts with Dengue virus envelope protein E type 3, type 2, type 4 and type 1 with decreasing strength. It depends on Zn(2+) as a cofactor. Expressed in midgut (at protein level).

The protein resides in the endoplasmic reticulum. The enzyme catalyses Preferential release of a C-terminal lysine or arginine amino acid.. Its activity is regulated as follows. Inhibited by S.tuberosum metallocarboxypeptidase inhibitor. Carboxypeptidase that preferentially hydrolyzes arginine and lysine residues at the C-terminus. During infection by dengue virus, may play a role in preventing viral packaging, maturation, and release from the midgut. The chain is Carboxypeptidase B1 from Aedes aegypti (Yellowfever mosquito).